Here is a 145-residue protein sequence, read N- to C-terminus: D-aminoacyl-tRNA deacylase (145 aa).

Positions 137 to 138 (GP) match the Gly-cisPro motif, important for rejection of L-amino acids motif.

Belongs to the DTD family. As to quaternary structure, homodimer.

The protein localises to the cytoplasm. It carries out the reaction glycyl-tRNA(Ala) + H2O = tRNA(Ala) + glycine + H(+). The catalysed reaction is a D-aminoacyl-tRNA + H2O = a tRNA + a D-alpha-amino acid + H(+). Functionally, an aminoacyl-tRNA editing enzyme that deacylates mischarged D-aminoacyl-tRNAs. Also deacylates mischarged glycyl-tRNA(Ala), protecting cells against glycine mischarging by AlaRS. Acts via tRNA-based rather than protein-based catalysis; rejects L-amino acids rather than detecting D-amino acids in the active site. By recycling D-aminoacyl-tRNA to D-amino acids and free tRNA molecules, this enzyme counteracts the toxicity associated with the formation of D-aminoacyl-tRNA entities in vivo and helps enforce protein L-homochirality. This Salmonella arizonae (strain ATCC BAA-731 / CDC346-86 / RSK2980) protein is D-aminoacyl-tRNA deacylase.